Consider the following 385-residue polypeptide: GTP cyclohydrolase-2 (385 aa).

The interval 1-189 (MYADAPSDSA…RDIADYRVHV (189 aa)) is DHBP synthase-like. Residues 190-385 (VRTLRRVAEA…TKAERSGHMF (196 aa)) form a GTP cyclohydrolase II region. Residue 240–244 (RLHSE) coordinates GTP. Positions 245, 256, and 258 each coordinate Zn(2+). Residues Gln-261, 283 to 285 (EGR), and Thr-305 each bind GTP. Catalysis depends on Asp-317, which acts as the Proton acceptor. The Nucleophile role is filled by Arg-319. GTP contacts are provided by Thr-340 and Lys-345.

This sequence in the N-terminal section; belongs to the DHBP synthase family. In the C-terminal section; belongs to the GTP cyclohydrolase II family. It depends on Zn(2+) as a cofactor.

It catalyses the reaction GTP + 4 H2O = 2,5-diamino-6-hydroxy-4-(5-phosphoribosylamino)-pyrimidine + formate + 2 phosphate + 3 H(+). The protein operates within cofactor biosynthesis; riboflavin biosynthesis; 5-amino-6-(D-ribitylamino)uracil from GTP: step 1/4. In terms of biological role, catalyzes the conversion of GTP to 2,5-diamino-6-ribosylamino-4(3H)-pyrimidinone 5'-phosphate (DARP), formate and pyrophosphate. In Azospirillum brasilense, this protein is GTP cyclohydrolase-2 (ribA).